Reading from the N-terminus, the 299-residue chain is Coenzyme PQQ synthesis protein B (299 aa).

It belongs to the PqqB family.

The protein operates within cofactor biosynthesis; pyrroloquinoline quinone biosynthesis. In terms of biological role, may be involved in the transport of PQQ or its precursor to the periplasm. The protein is Coenzyme PQQ synthesis protein B of Methylobacterium radiotolerans (strain ATCC 27329 / DSM 1819 / JCM 2831 / NBRC 15690 / NCIMB 10815 / 0-1).